The following is a 68-amino-acid chain: Large ribosomal subunit protein uL29 (68 aa).

The protein belongs to the universal ribosomal protein uL29 family.

The sequence is that of Large ribosomal subunit protein uL29 from Streptococcus gordonii (strain Challis / ATCC 35105 / BCRC 15272 / CH1 / DL1 / V288).